We begin with the raw amino-acid sequence, 513 residues long: Maturase K (513 aa).

Belongs to the intron maturase 2 family. MatK subfamily.

It is found in the plastid. The protein localises to the chloroplast. Its function is as follows. Usually encoded in the trnK tRNA gene intron. Probably assists in splicing its own and other chloroplast group II introns. This chain is Maturase K, found in Danthonia spicata (Poverty oatgrass).